The primary structure comprises 111 residues: uncharacterized protein (111 aa).

The next 2 helical transmembrane spans lie at 7-27 (ILNIILALAVPIGLLFISMMI) and 53-73 (AFAMFIPLLIIALTLLVTFLH).

The protein localises to the cell membrane. This is an uncharacterized protein from Bacillus anthracis.